A 221-amino-acid chain; its full sequence is Protein GrpE 1 (221 aa).

Disordered stretches follow at residues 1–44 (MTEE…AAAQ) and 192–221 (VAEP…PEEG). A compositionally biased stretch (low complexity) spans 26–44 (KAAPSEGAAPAGDAAAAAQ). Residues 203–221 (KADEAEAADDKESGGPEEG) show a composition bias toward basic and acidic residues.

This sequence belongs to the GrpE family. As to quaternary structure, homodimer.

The protein localises to the cytoplasm. Functionally, participates actively in the response to hyperosmotic and heat shock by preventing the aggregation of stress-denatured proteins, in association with DnaK and GrpE. It is the nucleotide exchange factor for DnaK and may function as a thermosensor. Unfolded proteins bind initially to DnaJ; upon interaction with the DnaJ-bound protein, DnaK hydrolyzes its bound ATP, resulting in the formation of a stable complex. GrpE releases ADP from DnaK; ATP binding to DnaK triggers the release of the substrate protein, thus completing the reaction cycle. Several rounds of ATP-dependent interactions between DnaJ, DnaK and GrpE are required for fully efficient folding. In Streptomyces avermitilis (strain ATCC 31267 / DSM 46492 / JCM 5070 / NBRC 14893 / NCIMB 12804 / NRRL 8165 / MA-4680), this protein is Protein GrpE 1.